Reading from the N-terminus, the 953-residue chain is Trafficking kinesin-binding protein 1 (953 aa).

In terms of domain architecture, HAP1 N-terminal spans 47–354; that stretch reads LEEQLPHYKL…EELKNLRNKT (308 aa). Residues 104–356 adopt a coiled-coil conformation; the sequence is QMTKTYNDID…LKNLRNKTMP (253 aa). Positions 359–509 are interaction with HGS; it reads TSRRYHSLGL…RRLSLRRENY (151 aa). An O-linked (GlcNAc) serine glycan is attached at S447. Residues 472–495 form a disordered region; sequence AADLGNDERSKKPGTPGTPGSHDL. Residues 492–532 are a coiled coil; sequence SHDLETALRRLSLRRENYLSERRFFEEEQERKLQELAEKGE. S537 is modified (phosphoserine). The segment at 658-672 is interaction with OGT; it reads PGKCMSQTNSTFTFT. Residues S680 and S719 are each glycosylated (O-linked (GlcNAc) serine). Residue S719 is modified to Phosphoserine. Residues 777-796 are disordered; sequence VIPSTPPNSPMQTPTSSPPS. Residues 786–796 are compositionally biased toward low complexity; the sequence is PMQTPTSSPPS. S919 is modified (phosphoserine). A glycan (O-linked (GlcNAc) threonine) is linked at T935.

The protein belongs to the milton family. Interacts with RHOT1 and RHOT2. Found in a complex with KIF5B, OGT, RHOT1 and RHOT2. Interacts with HGS. Interacts with GABRA1. Interacts with KIF5C. Interacts with OGT; stable interaction is not required for glycosylation of this protein by OGT. Isoform 1 interacts with OGT. O-glycosylated. Glycosylated by OGT; glycosylation in response to increased extracellular glucose levels is required for and leads to regulation of mitochondrial motility by OGT. As to expression, high expression in spinal cord and moderate expression in all other tissues and specific brain regions examined. Expressed in all cell lines examined.

It localises to the cytoplasm. The protein localises to the nucleus. Its subcellular location is the mitochondrion. The protein resides in the early endosome. It is found in the endosome. It localises to the mitochondrion membrane. The protein localises to the cell cortex. Functionally, involved in the regulation of endosome-to-lysosome trafficking, including endocytic trafficking of EGF-EGFR complexes and GABA-A receptors. Involved in mitochondrial motility. When O-glycosylated, abolishes mitochondrial motility. Crucial for recruiting OGT to the mitochondrial surface of neuronal processes. TRAK1 and RHOT form an essential protein complex that links KIF5 to mitochondria for light chain-independent, anterograde transport of mitochondria. The sequence is that of Trafficking kinesin-binding protein 1 (TRAK1) from Homo sapiens (Human).